The sequence spans 286 residues: Transcription initiation factor IIA large subunit (286 aa).

Disordered regions lie at residues 120 to 145 (NTVE…ADVT), 167 to 195 (TVEN…KEKE), and 208 to 236 (KRSA…EGEE). Residues 175–195 (SEKKDDEEKEEDVEKTRKEKE) show a composition bias toward basic and acidic residues. Acidic residues predominate over residues 214-236 (DTDEVGSELDDSDDDYLISEGEE).

The protein belongs to the TFIIA subunit 1 family. TFIIA is a heterodimer composed of the large TOA1 and a small TOA2 subunits. Interacts with KAP122.

Its subcellular location is the cytoplasm. It localises to the nucleus. In terms of biological role, TFIIA is a component of the transcription machinery of RNA polymerase II and implicated in the regulation of basal transcription. Interacts with TBP (the TATA-binding protein). In Saccharomyces cerevisiae (strain ATCC 204508 / S288c) (Baker's yeast), this protein is Transcription initiation factor IIA large subunit (TOA1).